A 149-amino-acid chain; its full sequence is Pleckstrin homology domain-containing family J member 1 (149 aa).

The PH domain occupies 15–108 (RAEKAAELGM…WVEALTNASY (94 aa)).

This Xenopus laevis (African clawed frog) protein is Pleckstrin homology domain-containing family J member 1 (plekhj1).